The chain runs to 395 residues: S-adenosylmethionine synthase (395 aa).

His16 is a binding site for ATP. Asp18 serves as a coordination point for Mg(2+). Glu44 provides a ligand contact to K(+). Residues Glu57 and Gln100 each coordinate L-methionine. The flexible loop stretch occupies residues Gln100–Arg110. Residues Asp167–Lys169, Arg233–Phe234, Asp242, Arg248–Lys249, Ala265, and Lys269 each bind ATP. Asp242 contacts L-methionine. Lys273 is an L-methionine binding site.

Belongs to the AdoMet synthase family. Homotetramer; dimer of dimers. The cofactor is Mg(2+). Requires K(+) as cofactor.

It localises to the cytoplasm. It catalyses the reaction L-methionine + ATP + H2O = S-adenosyl-L-methionine + phosphate + diphosphate. It functions in the pathway amino-acid biosynthesis; S-adenosyl-L-methionine biosynthesis; S-adenosyl-L-methionine from L-methionine: step 1/1. Its function is as follows. Catalyzes the formation of S-adenosylmethionine (AdoMet) from methionine and ATP. The overall synthetic reaction is composed of two sequential steps, AdoMet formation and the subsequent tripolyphosphate hydrolysis which occurs prior to release of AdoMet from the enzyme. This Burkholderia thailandensis (strain ATCC 700388 / DSM 13276 / CCUG 48851 / CIP 106301 / E264) protein is S-adenosylmethionine synthase.